Consider the following 84-residue polypeptide: MAQAQSPLQWLATTVIRGYQLFISPLMGPRCRFNPTCSHYAIEAIKLHGTAKGSWFALKRILRCHPLHPGGSDPVPPKNDRCNK.

It belongs to the UPF0161 family.

The protein resides in the cell inner membrane. Its function is as follows. Could be involved in insertion of integral membrane proteins into the membrane. This Shewanella denitrificans (strain OS217 / ATCC BAA-1090 / DSM 15013) protein is Putative membrane protein insertion efficiency factor.